A 385-amino-acid polypeptide reads, in one-letter code: Alanine racemase (385 aa).

The Proton acceptor; specific for D-alanine role is filled by Lys-40. Lys-40 bears the N6-(pyridoxal phosphate)lysine mark. Arg-139 provides a ligand contact to substrate. The Proton acceptor; specific for L-alanine role is filled by Tyr-268. Residue Met-315 participates in substrate binding.

It belongs to the alanine racemase family. Pyridoxal 5'-phosphate is required as a cofactor.

The catalysed reaction is L-alanine = D-alanine. It functions in the pathway amino-acid biosynthesis; D-alanine biosynthesis; D-alanine from L-alanine: step 1/1. Its function is as follows. Catalyzes the interconversion of L-alanine and D-alanine. May also act on other amino acids. The sequence is that of Alanine racemase (alr) from Anoxybacillus flavithermus (strain DSM 21510 / WK1).